A 258-amino-acid polypeptide reads, in one-letter code: Regulatory protein RecX (258 aa).

This sequence belongs to the RecX family.

Its subcellular location is the cytoplasm. Functionally, modulates RecA activity. This chain is Regulatory protein RecX, found in Streptococcus pyogenes serotype M2 (strain MGAS10270).